Consider the following 212-residue polypeptide: Pyridoxine/pyridoxamine 5'-phosphate oxidase (212 aa).

Substrate is bound by residues 8-11 and Lys-66; that span reads RRSY. FMN-binding positions include 61–66, 76–77, Arg-82, Lys-83, and Gln-105; these read RIVLLK and FT. Substrate-binding residues include Tyr-123, Arg-127, and Ser-131. FMN-binding positions include 140–141 and Trp-184; that span reads QS. Position 190 to 192 (190 to 192) interacts with substrate; sequence RLH. Arg-194 lines the FMN pocket.

This sequence belongs to the pyridoxamine 5'-phosphate oxidase family. Homodimer. FMN is required as a cofactor.

The catalysed reaction is pyridoxamine 5'-phosphate + O2 + H2O = pyridoxal 5'-phosphate + H2O2 + NH4(+). It carries out the reaction pyridoxine 5'-phosphate + O2 = pyridoxal 5'-phosphate + H2O2. It participates in cofactor metabolism; pyridoxal 5'-phosphate salvage; pyridoxal 5'-phosphate from pyridoxamine 5'-phosphate: step 1/1. Its pathway is cofactor metabolism; pyridoxal 5'-phosphate salvage; pyridoxal 5'-phosphate from pyridoxine 5'-phosphate: step 1/1. Catalyzes the oxidation of either pyridoxine 5'-phosphate (PNP) or pyridoxamine 5'-phosphate (PMP) into pyridoxal 5'-phosphate (PLP). The protein is Pyridoxine/pyridoxamine 5'-phosphate oxidase of Cupriavidus necator (strain ATCC 17699 / DSM 428 / KCTC 22496 / NCIMB 10442 / H16 / Stanier 337) (Ralstonia eutropha).